The sequence spans 262 residues: Putative hydro-lyase cu1581 (262 aa).

It belongs to the D-glutamate cyclase family.

The polypeptide is Putative hydro-lyase cu1581 (Corynebacterium urealyticum (strain ATCC 43042 / DSM 7109)).